We begin with the raw amino-acid sequence, 286 residues long: Haloalkane dehalogenase 2 (286 aa).

The AB hydrolase-1 domain maps to Pro35 to Thr134. Asp109 functions as the Nucleophile in the catalytic mechanism. Asp238 functions as the Proton donor in the catalytic mechanism. The Proton acceptor role is filled by His267.

The protein belongs to the haloalkane dehalogenase family. Type 1 subfamily. As to quaternary structure, monomer.

It carries out the reaction 1-haloalkane + H2O = a halide anion + a primary alcohol + H(+). Its function is as follows. Catalyzes hydrolytic cleavage of carbon-halogen bonds in halogenated aliphatic compounds, leading to the formation of the corresponding primary alcohols, halide ions and protons. This chain is Haloalkane dehalogenase 2 (dhmA2), found in Mycobacterium bovis (strain ATCC BAA-935 / AF2122/97).